The primary structure comprises 59 residues: Large ribosomal subunit protein bL32 (59 aa).

Residues 1–16 are compositionally biased toward basic residues; that stretch reads MAVPKRKTSPSRRGMR. The segment at 1–59 is disordered; that stretch reads MAVPKRKTSPSRRGMRRSADALKAPTYVEDKNSGELRRPHHIDLKSGMYRGRQVLEPKE. A compositionally biased stretch (basic and acidic residues) spans 28-44; it reads VEDKNSGELRRPHHIDL.

Belongs to the bacterial ribosomal protein bL32 family.

The chain is Large ribosomal subunit protein bL32 from Brucella abortus (strain S19).